The sequence spans 161 residues: Nucleotide-binding protein Pfl01_4421 (161 aa).

The protein belongs to the YajQ family.

Nucleotide-binding protein. This chain is Nucleotide-binding protein Pfl01_4421, found in Pseudomonas fluorescens (strain Pf0-1).